The chain runs to 107 residues: U1-lycotoxin-Ls1k (107 aa).

Positions 1 to 20 (MMKVLVVVALLVTLISYSSS) are cleaved as a signal peptide. Residues 21–41 (EGIDDLEADELLSLMANEQTR) constitute a propeptide that is removed on maturation. 4 disulfides stabilise this stretch: cysteine 44-cysteine 59, cysteine 51-cysteine 68, cysteine 58-cysteine 86, and cysteine 70-cysteine 84.

This sequence belongs to the neurotoxin 19 (CSTX) family. 04 (U1-Lctx) subfamily. Expressed by the venom gland.

The protein localises to the secreted. The polypeptide is U1-lycotoxin-Ls1k (Lycosa singoriensis (Wolf spider)).